Consider the following 347-residue polypeptide: Phenylalanine--tRNA ligase alpha subunit (347 aa).

Position 261 (Glu-261) interacts with Mg(2+).

Belongs to the class-II aminoacyl-tRNA synthetase family. Phe-tRNA synthetase alpha subunit type 1 subfamily. In terms of assembly, tetramer of two alpha and two beta subunits. It depends on Mg(2+) as a cofactor.

The protein resides in the cytoplasm. The enzyme catalyses tRNA(Phe) + L-phenylalanine + ATP = L-phenylalanyl-tRNA(Phe) + AMP + diphosphate + H(+). In Streptococcus equi subsp. equi (strain 4047), this protein is Phenylalanine--tRNA ligase alpha subunit.